A 436-amino-acid chain; its full sequence is Transcriptional regulator VdtR (436 aa).

Positions 17–44 (CDRCSANKVKCTQEKPECERCRLLSLPC) form a DNA-binding region, zn(2)-C6 fungal-type. Disordered regions lie at residues 51–147 (RIGK…HDKG) and 173–192 (TARE…EYSD). The span at 125–141 (SHNSNRPTNMASTNQDQ) shows a compositional bias: polar residues. Residues 174–192 (AREDQKQHPELRSEEEYSD) show a composition bias toward basic and acidic residues.

Its subcellular location is the nucleus. Transcription factor that regulates expression of the viriditoxin biosynthesis cluster and viriditoxin synthesis. This chain is Transcriptional regulator VdtR, found in Byssochlamys spectabilis (Paecilomyces variotii).